Reading from the N-terminus, the 389-residue chain is MNIHEYQGKEILRKYNVPVPRGIPAFSVAEALKAAEELGGPVWVVKAQIHAGGRGKGGGVKVAKSIDDVKTYATNILGMQLVTHQTGPEGKKVNRLLIEEGADIKKELYVSLVVDRVSQKIALMASSEGGMDIEEVAAHTPEKIHTLIIEPSTGLTDADADDIARKIGVPDASVAQARQALQGLYKAFYDTDASLAEINPLILTGEGKVIALDAKFNFDSNALFRHPEIVAYRDLDEEDANEIEASKFDLAYISLDGNIGCLVNGAGLAMATMDTIKLFGGEPANFLDVGGGATTEKVTEAFKLMLKNPNVEAILVNIFGGIMRCDVIAEGVISASKAVNLTVPLVVRMKGTNEDLGKKMLADSGLPIIAADTMEEAAQKVVAAAAGKK.

An ATP-grasp domain is found at 9–244; sequence KEILRKYNVP…LDEEDANEIE (236 aa). Residues Lys-46, 53–55, Glu-99, Ala-102, and Glu-107 contribute to the ATP site; that span reads GRG. Residues Asn-199 and Asp-213 each coordinate Mg(2+). Substrate-binding positions include Asn-264 and 321–323; that span reads GIM.

Belongs to the succinate/malate CoA ligase beta subunit family. In terms of assembly, heterotetramer of two alpha and two beta subunits. It depends on Mg(2+) as a cofactor.

It carries out the reaction succinate + ATP + CoA = succinyl-CoA + ADP + phosphate. The enzyme catalyses GTP + succinate + CoA = succinyl-CoA + GDP + phosphate. It functions in the pathway carbohydrate metabolism; tricarboxylic acid cycle; succinate from succinyl-CoA (ligase route): step 1/1. Succinyl-CoA synthetase functions in the citric acid cycle (TCA), coupling the hydrolysis of succinyl-CoA to the synthesis of either ATP or GTP and thus represents the only step of substrate-level phosphorylation in the TCA. The beta subunit provides nucleotide specificity of the enzyme and binds the substrate succinate, while the binding sites for coenzyme A and phosphate are found in the alpha subunit. The polypeptide is Succinate--CoA ligase [ADP-forming] subunit beta (Cupriavidus pinatubonensis (strain JMP 134 / LMG 1197) (Cupriavidus necator (strain JMP 134))).